A 186-amino-acid chain; its full sequence is Guanylate kinase (186 aa).

Positions 5–183 constitute a Guanylate kinase-like domain; sequence GNLTVLTGPS…AFKEIEGFMG (179 aa). An ATP-binding site is contributed by 12 to 19; sequence GPSGVGKG.

The protein belongs to the guanylate kinase family.

The protein localises to the cytoplasm. It carries out the reaction GMP + ATP = GDP + ADP. Functionally, essential for recycling GMP and indirectly, cGMP. This Prochlorococcus marinus (strain NATL2A) protein is Guanylate kinase.